A 79-amino-acid polypeptide reads, in one-letter code: UPF0154 protein lwe1321 (79 aa).

A helical transmembrane segment spans residues 2 to 22 (WIYILVGIICLLAGLAGGFFI). Polar residues predominate over residues 57–66 (KINQMMSAMN). The disordered stretch occupies residues 57–79 (KINQMMSAMNKQQEKEKPKKAKK).

Belongs to the UPF0154 family.

The protein resides in the cell membrane. The sequence is that of UPF0154 protein lwe1321 from Listeria welshimeri serovar 6b (strain ATCC 35897 / DSM 20650 / CCUG 15529 / CIP 8149 / NCTC 11857 / SLCC 5334 / V8).